The primary structure comprises 160 residues: Cytochrome b6-f complex subunit 4 (160 aa).

3 helical membrane-spanning segments follow: residues 36–56 (LLYI…GLSV), 95–115 (LLGV…PFIE), and 131–151 (TVFL…ALPI).

Belongs to the cytochrome b family. PetD subfamily. In terms of assembly, the 4 large subunits of the cytochrome b6-f complex are cytochrome b6, subunit IV (17 kDa polypeptide, petD), cytochrome f and the Rieske protein, while the 4 small subunits are petG, petL, petM and petN. The complex functions as a dimer.

The protein resides in the plastid. It localises to the chloroplast thylakoid membrane. Functionally, component of the cytochrome b6-f complex, which mediates electron transfer between photosystem II (PSII) and photosystem I (PSI), cyclic electron flow around PSI, and state transitions. This Chlorella vulgaris (Green alga) protein is Cytochrome b6-f complex subunit 4.